A 190-amino-acid chain; its full sequence is Putative manganese efflux pump MntP (190 aa).

The next 6 membrane-spanning stretches (helical) occupy residues 3 to 23, 37 to 57, 72 to 88, 111 to 131, 138 to 158, and 164 to 184; these read FLQIFLLSIGVAADAFACSVV, LVLAGIFGVFQAAMPLIGWVI, HWIAFALLGVVGAKMIW, IILGLATSIDALAVGMGLAFV, VALSMGLITFALSLVGAWIGH, and FGKWATILGGIILIGIGANIV.

This sequence belongs to the MntP (TC 9.B.29) family.

Its subcellular location is the cell membrane. Its function is as follows. Probably functions as a manganese efflux pump. In Corynebacterium glutamicum (strain R), this protein is Putative manganese efflux pump MntP.